Reading from the N-terminus, the 247-residue chain is Acidic leucine-rich nuclear phosphoprotein 32 family member A (247 aa).

Position 15 is a phosphothreonine (Thr-15). Phosphoserine is present on Ser-17. 4 LRR repeats span residues 18 to 41, 43 to 64, 65 to 87, and 89 to 110; these read DVKE…TDEF, ELEF…PKLN, KLKK…AEKC, and NLKH…EPLK. The region spanning 123–161 is the LRRCT domain; the sequence is CEVTNLNAYRENVFKLLPQVMYLDGYDRDNKEAPDSDVE. The interval 150–172 is necessary for tumor-suppressive function; the sequence is RDNKEAPDSDVEGYVEDDDEEDE. A disordered region spans residues 150-247; it reads RDNKEAPDSD…EPDDEGQEDD (98 aa). Over residues 157-230 the composition is skewed to acidic residues; sequence DSDVEGYVED…EDEEDAAEEE (74 aa). Phosphoserine occurs at positions 158 and 202. The interaction with E4F1 stretch occupies residues 165 to 247; sequence EDDDEEDEDE…EPDDEGQEDD (83 aa).

This sequence belongs to the ANP32 family. As to quaternary structure, component of the SET complex, composed of at least ANP32A, APEX1, HMGB2, NME1, SET and TREX1. Directly interacts with SET. Interacts with ATXN1/SCA1. Interacts with MAP1B. Interacts with ELAVL1. Part of the INHAT (inhibitor of histone acetyltransferases) complex. Interacts with E4F1. Phosphorylated on serine residues, at least in part by casein kinase 2/CK2. In terms of processing, some glutamate residues are glycylated by TTLL8. This modification occurs exclusively on glutamate residues and results in a glycine chain on the gamma-carboxyl group. In terms of tissue distribution, widely distributed in the central nervous system, with an abundant expression in the cerebellum.

The protein localises to the nucleus. It localises to the cytoplasm. It is found in the endoplasmic reticulum. Multifunctional protein that is involved in the regulation of many processes including tumor suppression, apoptosis, cell cycle progression or transcription. Promotes apoptosis by favouring the activation of caspase-9/CASP9 and allowing apoptosome formation. In addition, plays a role in the modulation of histone acetylation and transcription as part of the INHAT (inhibitor of histone acetyltransferases) complex. Inhibits the histone-acetyltranferase activity of EP300/CREBBP (CREB-binding protein) and EP300/CREBBP-associated factor by histone masking. Preferentially binds to unmodified histone H3 and sterically inhibiting its acetylation and phosphorylation leading to cell growth inhibition. Participates in other biochemical processes such as regulation of mRNA nuclear-to-cytoplasmic translocation and stability by its association with ELAVL1 (Hu-antigen R). Plays a role in E4F1-mediated transcriptional repression as well as inhibition of protein phosphatase 2A. The protein is Acidic leucine-rich nuclear phosphoprotein 32 family member A (Anp32a) of Rattus norvegicus (Rat).